We begin with the raw amino-acid sequence, 264 residues long: Glucosamine-6-phosphate deaminase (264 aa).

Residue Asp-72 is the Proton acceptor; for enolization step of the active site. Asp-141 functions as the For ring-opening step in the catalytic mechanism. Catalysis depends on His-143, which acts as the Proton acceptor; for ring-opening step. Catalysis depends on Glu-148, which acts as the For ring-opening step.

This sequence belongs to the glucosamine/galactosamine-6-phosphate isomerase family. NagB subfamily. Homohexamer.

It carries out the reaction alpha-D-glucosamine 6-phosphate + H2O = beta-D-fructose 6-phosphate + NH4(+). It functions in the pathway amino-sugar metabolism; N-acetylneuraminate degradation; D-fructose 6-phosphate from N-acetylneuraminate: step 5/5. Its activity is regulated as follows. Allosterically activated by N-acetylglucosamine 6-phosphate (GlcNAc6P). Its function is as follows. Catalyzes the reversible isomerization-deamination of glucosamine 6-phosphate (GlcN6P) to form fructose 6-phosphate (Fru6P) and ammonium ion. This is Glucosamine-6-phosphate deaminase from Glaesserella parasuis serovar 5 (strain SH0165) (Haemophilus parasuis).